The sequence spans 622 residues: Neuronal acetylcholine receptor subunit alpha-4 (622 aa).

Residues 1 to 23 (MGFLVSKGNLLLLLCASIFPAFG) form the signal peptide. The Extracellular segment spans residues 24–237 (HVETRAHAEE…ITYSFIIRRL (214 aa)). N-linked (GlcNAc...) asparagine glycosylation is present at Asn-52. Val-71 and Glu-73 together coordinate Ca(2+). A glycan (N-linked (GlcNAc...) asparagine) is linked at Asn-102. Disulfide bonds link Cys-156-Cys-170 and Cys-220-Cys-221. A helical membrane pass occupies residues 238–262 (PLFYTINLIIPCLLISCLTVLVFYL). Cys-266 carries the S-palmitoyl cysteine lipid modification. 2 consecutive transmembrane segments (helical) span residues 270–288 (ITLCISVLLSLTVFLLLIT) and 304–325 (YLLFTMIFVTLSIIITVFVLNV). The Cytoplasmic portion of the chain corresponds to 326-595 (HHRSPRTHTM…WKYVAMVIDR (270 aa)). Disordered stretches follow at residues 380-477 (WSET…TEEG) and 497-516 (QTNGHSSASPASQRCHLNEE). A compositionally biased stretch (low complexity) spans 390–407 (TTSSSPSPQSNEPSPTSS). Polar residues-rich tracts occupy residues 450–472 (SDTQTTSISKGRSLSVQQMYSPN) and 497–508 (QTNGHSSASPAS). Residues 596–614 (IFLWMFIIVCLLGTVGLFL) form a helical membrane-spanning segment.

The protein belongs to the ligand-gated ion channel (TC 1.A.9) family. Acetylcholine receptor (TC 1.A.9.1) subfamily. Alpha-4/CHRNA4 sub-subfamily. Neuronal AChR is composed of two different types of subunits: alpha and beta. CHRNA4 forms heteropentameric neuronal acetylcholine receptors with CHRNB2 and CHRNB4, as well as CHRNA5 and CHRNB3 as accesory subunits. Found in two major stoichiometric forms, LS (low agonist sensitivity): (CHRNA4)3:(CHRNB2)2 and HS (high agonist sensitivity): (CHRNA4)2:(CHRNB2)3, the two stoichiometric forms differ in their unitary conductance, calcium permeability, ACh sensitivity and potentiation by divalent cation. Cells produce predominantly an (CHRNA4)3:(CHRNB2)2 nAChR. The (CHRNA4)2:(CHRNB2)3 expression is selectively up-regulated by nicotine and has lower single channel conductance and calcium permeability. In the striatum, also forms CHRNA4:CHRNA6:CHRNB2 complexes. Also found in the stoichiometric form: (CHRNA4:CHRNB2)2:CHRNB3.

The protein localises to the synaptic cell membrane. Its subcellular location is the cell membrane. It catalyses the reaction Ca(2+)(in) = Ca(2+)(out). It carries out the reaction K(+)(in) = K(+)(out). The catalysed reaction is Na(+)(in) = Na(+)(out). With respect to regulation, activated by a myriad of ligands such as acetylcholine, cytisine, nicotine, choline and epibatidine. Channel potentiation by calcium is stoichiometry-selective, CHRNA4:CHRNB2 nACh receptor is achieved by calcium association with topographically distinct sites framed by anionic residues within the CHRNA4 subunit and between the CHRNA4 and CHRNB2 subunits. nAChR activity is inhibited by the antagonist alpha-conotoxins BuIA, PnIA, GID and MII, small disulfide-constrained peptides from cone snails. In terms of biological role, component of neuronal acetylcholine receptors (nAChRs) that function as pentameric, ligand-gated cation channels with high calcium permeability among other activities. nAChRs are excitatory neurotrasnmitter receptors formed by a collection of nAChR subunits known to mediate synaptic transmission in the nervous system and the neuromuscular junction. Each nAchR subunit confers differential attributes to channel properties, including activation, deactivation and desensitization kinetics, pH sensitivity, cation permeability, and binding to allosteric modulators. CHRNA4 forms heteropentameric neuronal acetylcholine receptors with CHRNB2 and CHRNB4, as well as CHRNA5 and CHRNB3 as accesory subunits. Is the most abundant nAChR subtype expressed in the central nervous system. Found in two major stoichiometric forms,(CHRNA4)3:(CHRNB2)2 and (CHRNA4)2:(CHRNB2)3, the two stoichiometric forms differ in their unitary conductance, calcium permeability, ACh sensitivity and potentiation by divalent cation. Involved in the modulation of calcium-dependent signaling pathways, influences the release of neurotransmitters, including dopamine, glutamate and GABA. This is Neuronal acetylcholine receptor subunit alpha-4 (CHRNA4) from Gallus gallus (Chicken).